The chain runs to 38 residues: Kappa-actitoxin-Bcs3a (38 aa).

One can recognise a ShKT domain in the interval 2–37 (CIDRFPTGTCKHVKKGGSCKNSQKYRINCAKTCGLC). Disulfide bonds link cysteine 2-cysteine 37, cysteine 11-cysteine 30, and cysteine 20-cysteine 34. Positions 25 to 26 (KY) are crucial for binding to potassium channels.

The protein belongs to the sea anemone type 1 potassium channel toxin family. Type 1b subfamily.

The protein resides in the secreted. The protein localises to the nematocyst. Its function is as follows. Inhibits voltage-gated potassium channels (IC(50)=405.0 nM for rKCNA1/Kv1.1, IC(50)=0.03 nM for rKCNA2/Kv1.2, IC(50)=1.31 nM for rKCNA6/Kv1.6, IC(50)=74.11 nM for hKCNA3/Kv1.3, and IC(50)=247.69 nM for insect Shaker IR). Binds the Shaker IR channels in a voltage-independent manner. This is Kappa-actitoxin-Bcs3a from Bunodosoma caissarum (Sea anemone).